The sequence spans 505 residues: Cell division control protein 6 homolog B (505 aa).

The interval 37 to 72 is disordered; it reads KRKMRSDSAAVSGNSVSTPKKLKSHLPSSVPNPGMS. A compositionally biased stretch (polar residues) spans 45-54; it reads AAVSGNSVST.

Belongs to the CDC6/cdc18 family.

It localises to the nucleus. In terms of biological role, may be involved in the initiation of DNA replication. The sequence is that of Cell division control protein 6 homolog B from Arabidopsis thaliana (Mouse-ear cress).